Reading from the N-terminus, the 306-residue chain is Type 2A encapsulin shell protein SrpI (306 aa).

Belongs to the encapsulin family. Family 2A subfamily. In terms of assembly, the 24.5 nm encapsulin nanocompartment is formed by 60 subunits; monomers form pentamers which assemble to form shells. There are 12 positively charged pores where the pentamers meet with a minimal pore diameter of 3.7 Angstroms as well 3-fold axis channels and dimer channels.

It is found in the encapsulin nanocompartment. Functionally, shell component of a type 2A encapsulin nanocompartment. Expression in E.coli generates nanocompartments with an average diameter of 25 nm. They can be disassembled by treatment with 6M guanidine hydrochloride and reassembled with cargo. The nanocompartment is probably involved in sulfur metabolism. Probably allows passage of cysteine into its interior; during growth in light the physiological pH is 8-8.4, about 30-54% of free cysteine (charge -1) would be able to pass through the shell. The polypeptide is Type 2A encapsulin shell protein SrpI (Synechococcus elongatus (strain ATCC 33912 / PCC 7942 / FACHB-805) (Anacystis nidulans R2)).